The following is a 341-amino-acid chain: S-adenosylmethionine:tRNA ribosyltransferase-isomerase (341 aa).

It belongs to the QueA family. As to quaternary structure, monomer.

It localises to the cytoplasm. It catalyses the reaction 7-aminomethyl-7-carbaguanosine(34) in tRNA + S-adenosyl-L-methionine = epoxyqueuosine(34) in tRNA + adenine + L-methionine + 2 H(+). Its pathway is tRNA modification; tRNA-queuosine biosynthesis. Its function is as follows. Transfers and isomerizes the ribose moiety from AdoMet to the 7-aminomethyl group of 7-deazaguanine (preQ1-tRNA) to give epoxyqueuosine (oQ-tRNA). In Pelodictyon phaeoclathratiforme (strain DSM 5477 / BU-1), this protein is S-adenosylmethionine:tRNA ribosyltransferase-isomerase.